Here is a 96-residue protein sequence, read N- to C-terminus: ATP synthase subunit c (96 aa).

Transmembrane regions (helical) follow at residues 26–46 (GLVLFGAAIGMAIAAAGCGIG) and 68–88 (IMVTLILGLAFVESLAIYALV).

It belongs to the ATPase C chain family. F-type ATPases have 2 components, F(1) - the catalytic core - and F(0) - the membrane proton channel. F(1) has five subunits: alpha(3), beta(3), gamma(1), delta(1), epsilon(1). F(0) has three main subunits: a(1), b(2) and c(10-14). The alpha and beta chains form an alternating ring which encloses part of the gamma chain. F(1) is attached to F(0) by a central stalk formed by the gamma and epsilon chains, while a peripheral stalk is formed by the delta and b chains.

The protein localises to the cell inner membrane. Functionally, f(1)F(0) ATP synthase produces ATP from ADP in the presence of a proton or sodium gradient. F-type ATPases consist of two structural domains, F(1) containing the extramembraneous catalytic core and F(0) containing the membrane proton channel, linked together by a central stalk and a peripheral stalk. During catalysis, ATP synthesis in the catalytic domain of F(1) is coupled via a rotary mechanism of the central stalk subunits to proton translocation. In terms of biological role, key component of the F(0) channel; it plays a direct role in translocation across the membrane. A homomeric c-ring of between 10-14 subunits forms the central stalk rotor element with the F(1) delta and epsilon subunits. The polypeptide is ATP synthase subunit c (Oleidesulfovibrio alaskensis (strain ATCC BAA-1058 / DSM 17464 / G20) (Desulfovibrio alaskensis)).